The following is an 835-amino-acid chain: MNQIEQKWQHIWQEEKAFEVSNASSKPKYYVLEMLPYPSGKIHVGHVRNYSIGDVIARFMTMQGFNVLHPMGWDAFGLPAENAAIKNNSHPKKWTYSNIENMKKQLKSMGFSYDWSREINSCDPEYYKHEQKFFLELYERNLAYQKESLVNWDPVDNTVLANEQVVDGRGWRSGAIVAKRYLKQWFLKITDYAEELLNEIQNLKEWPEAVRSMQEKWIGKSIGANFHFKIKDNEETTIEVFSTKPETIFGASFIGIAFNHPIIERLVSKTPEILAFITKCSHITGSSELEKAEKEGVFTGLFVIHPFDSNIVLPVIITNFVLMDYGTGAIFGCPANDERDHELAVKMNLSIKQVIKADMDVQKTAYTEDGILVNSDFLNGLTSNEAKQEVIGEFEKLGIGKRSVNYRLKDWGISRQRFWGCPIPIIHCETCGIVPVPYKDLPVTLPDDVNFDGHGNPLDHHPSWKHVDCPKCDKPAVRETDTFDTFFESSWYFTRYCNSNAIEMTDKKACDYWLPVDKYIGGIEHAVMHLLYARFFTKVMNEQKYVSVREPFKGLFTQGMVLHATYKDEHNNWLYPEEVVKKGNEFFHKESNNRVVQGRIEKMSKSKKNLIDLETMQEQYGADAIRLFVLSDSPPEKDLEWSASGIEGCSRFINKLEYMFKAIDSLKDDVNSEINKELNRLVHFTIKLVAEDIKHFALNRAIARMRELSNAISAEISKDKIDVKTVRHGFNVLVQLLNPFIPHITEEIWQKLGNKKRLYNSSFPAFDESMLELDTYIMAVQVNGKLRDTYEFKTSVSEDEIKQVTVSLPKVQKFLEGKEPKKIILVPRKIVNILV.

The 'HIGH' region motif lies at 36 to 46 (PYPSGKIHVGH). The short motif at 602 to 606 (KMSKS) is the 'KMSKS' region element. Position 605 (Lys-605) interacts with ATP.

This sequence belongs to the class-I aminoacyl-tRNA synthetase family.

The protein resides in the cytoplasm. It carries out the reaction tRNA(Leu) + L-leucine + ATP = L-leucyl-tRNA(Leu) + AMP + diphosphate. This is Leucine--tRNA ligase from Rickettsia massiliae (strain Mtu5).